Consider the following 805-residue polypeptide: Leucine--tRNA ligase (805 aa).

Residues Pro-40 to His-51 carry the 'HIGH' region motif. Residues Lys-576–Ser-580 carry the 'KMSKS' region motif. Lys-579 serves as a coordination point for ATP.

This sequence belongs to the class-I aminoacyl-tRNA synthetase family.

It is found in the cytoplasm. The enzyme catalyses tRNA(Leu) + L-leucine + ATP = L-leucyl-tRNA(Leu) + AMP + diphosphate. The protein is Leucine--tRNA ligase of Chloroherpeton thalassium (strain ATCC 35110 / GB-78).